The following is a 231-amino-acid chain: Trypsin-2 (231 aa).

An N-terminal signal peptide occupies residues 1-4 (AAFA). The propeptide at 5–9 (TEDDK) is activation peptide. The region spanning 10 to 229 (IVGGYECKAY…FNDWLTSTMA (220 aa)) is the Peptidase S1 domain. Cystine bridges form between cysteine 16/cysteine 145, cysteine 34/cysteine 50, cysteine 118/cysteine 218, cysteine 125/cysteine 191, cysteine 156/cysteine 170, and cysteine 181/cysteine 205. Histidine 49 acts as the Charge relay system in catalysis. Ca(2+) is bound by residues glutamate 61, asparagine 63, valine 66, and glutamate 71. Aspartate 93 serves as the catalytic Charge relay system. Serine 185 functions as the Charge relay system in the catalytic mechanism.

This sequence belongs to the peptidase S1 family. Requires Ca(2+) as cofactor.

The protein localises to the secreted. It localises to the extracellular space. It carries out the reaction Preferential cleavage: Arg-|-Xaa, Lys-|-Xaa.. This is Trypsin-2 from Salmo salar (Atlantic salmon).